A 247-amino-acid polypeptide reads, in one-letter code: ATP synthase subunit a, chloroplastic (247 aa).

The next 5 helical transmembrane spans lie at 38–58 (QVLI…TLAV), 95–115 (VPFI…GALL), 134–154 (INTT…AGLT), 199–219 (LVVV…VMFL), and 220–240 (GLFT…AYIG).

It belongs to the ATPase A chain family. In terms of assembly, F-type ATPases have 2 components, CF(1) - the catalytic core - and CF(0) - the membrane proton channel. CF(1) has five subunits: alpha(3), beta(3), gamma(1), delta(1), epsilon(1). CF(0) has four main subunits: a, b, b' and c.

The protein resides in the plastid. The protein localises to the chloroplast thylakoid membrane. In terms of biological role, key component of the proton channel; it plays a direct role in the translocation of protons across the membrane. This Guizotia abyssinica (Niger) protein is ATP synthase subunit a, chloroplastic.